Here is a 241-residue protein sequence, read N- to C-terminus: 2,3-bisphosphoglycerate-dependent phosphoglycerate mutase (241 aa).

Residue H12 is the Tele-phosphohistidine intermediate of the active site. Substrate contacts are provided by residues S24–G25, R61, E117–Y120, and K128. The Proton donor/acceptor role is filled by E117.

Belongs to the phosphoglycerate mutase family. BPG-dependent PGAM subfamily.

It carries out the reaction (2R)-2-phosphoglycerate = (2R)-3-phosphoglycerate. It functions in the pathway carbohydrate degradation; glycolysis; pyruvate from D-glyceraldehyde 3-phosphate: step 3/5. Functionally, catalyzes the interconversion of 2-phosphoglycerate and 3-phosphoglycerate. The polypeptide is 2,3-bisphosphoglycerate-dependent phosphoglycerate mutase (Methanosarcina mazei (strain ATCC BAA-159 / DSM 3647 / Goe1 / Go1 / JCM 11833 / OCM 88) (Methanosarcina frisia)).